A 1066-amino-acid polypeptide reads, in one-letter code: Elongation factor 3 (1066 aa).

HEAT repeat units lie at residues 112-149 (FIFE…VMSP), 151-188 (AAQQ…ACPE), 192-229 (ALMP…LISN), 231-268 (DIER…EVDS), 269-306 (ATLA…LVDN), and 312-353 (PFLG…VTGD). Residue Thr-418 participates in ADP binding. 2 consecutive ABC transporter domains span residues 454-672 (EEGE…YAEL) and 699-1015 (IKMK…KKEE). Residues Asn-735, Glu-944, Asn-947, and His-973 each coordinate ADP. The interval 997 to 1066 (GHDWTESNSK…YDSADELEDL (70 aa)) is disordered. Positions 1042-1054 (RKAKKDRMARKKA) are enriched in basic residues.

Belongs to the ABC transporter superfamily. ABCF family. EF3 subfamily.

The protein localises to the cytoplasm. The protein resides in the cytosol. The enzyme catalyses ATP + H2O = ADP + phosphate + H(+). It functions in the pathway protein biosynthesis; polypeptide chain elongation. Functionally, ribosome-dependent ATPase that functions in cytoplasmic translation elongation. Required for the ATP-dependent release of deacylated tRNA from the ribosomal E-site during protein biosynthesis. Stimulates the eEF1A-dependent binding of aminoacyl-tRNA to the ribosomal A-site, which has reduced affinity for tRNA as long as the E-site is occupied. Assists translation termination by stimulating the release of nascent protein from the ribosome by release factors. The sequence is that of Elongation factor 3 from Mycosarcoma maydis (Corn smut fungus).